The chain runs to 419 residues: Zinc metalloproteinase-disintegrin-like atrolysin-A (419 aa).

In terms of domain architecture, Peptidase M12B spans 6-202; the sequence is RYVELVIVAD…YNPQCILNEP (197 aa). Glutamate 9 is a binding site for Ca(2+). Residue asparagine 72 is glycosylated (N-linked (GlcNAc...) asparagine). Aspartate 93 contributes to the Ca(2+) binding site. Intrachain disulfides connect cysteine 117–cysteine 197, cysteine 157–cysteine 181, and cysteine 159–cysteine 164. Residue histidine 142 coordinates Zn(2+). Glutamate 143 is a catalytic residue. Histidine 146 and histidine 152 together coordinate Zn(2+). 8 residues coordinate Ca(2+): cysteine 197, asparagine 200, valine 212, asparagine 215, leucine 217, glutamate 219, glutamate 222, and aspartate 225. A Disintegrin domain is found at 210–296; that stretch reads PPVCGNELLE…DCPTDDFHRN (87 aa). 14 disulfide bridges follow: cysteine 213–cysteine 242, cysteine 224–cysteine 237, cysteine 226–cysteine 232, cysteine 236–cysteine 259, cysteine 250–cysteine 256, cysteine 255–cysteine 281, cysteine 268–cysteine 288, cysteine 275–cysteine 307, cysteine 300–cysteine 312, cysteine 319–cysteine 369, cysteine 334–cysteine 376, cysteine 347–cysteine 357, cysteine 364–cysteine 398, and cysteine 392–cysteine 403. A D/ECD-tripeptide motif is present at residues 274 to 276; that stretch reads ECD. 3 N-linked (GlcNAc...) asparagine glycosylation sites follow: asparagine 326, asparagine 338, and asparagine 342.

It belongs to the venom metalloproteinase (M12B) family. P-III subfamily. P-IIIa sub-subfamily. In terms of assembly, monomer. Requires Zn(2+) as cofactor. As to expression, expressed by the venom gland.

The protein localises to the secreted. It catalyses the reaction Cleavage of 3-Asn-|-Gln-4, 5-His-|-Leu-6, 10-His-|-Leu-11, 14-Ala-|-Leu-15 and 16-Tyr-|-Leu-17 in insulin B chain. Removes C-terminal Leu from small peptides.. Its function is as follows. Snake venom zinc metalloproteinase-disintegrin that causes hemorrhage by provoking the degradation of the sub-endothelial matrix proteins (fibronectin, laminin, type IV collagen, nidogen, and gelatins) and disturbances in platelet function. The recombinant cysteine-rich domain interacts with the alpha-2/beta-1 integrin (ITGA2/ITGB1) (collagen receptor), and inhibits the platelet aggregation induced by collagen. The protein is Zinc metalloproteinase-disintegrin-like atrolysin-A of Crotalus atrox (Western diamondback rattlesnake).